Here is a 359-residue protein sequence, read N- to C-terminus: 3-dehydroquinate synthase (359 aa).

NAD(+) contacts are provided by residues 72-77 (EGEEHK), 106-110 (GVVGD), 130-131 (TT), Lys-143, Lys-152, and 170-173 (TLTT). Glu-185, His-248, and His-265 together coordinate Zn(2+).

Belongs to the sugar phosphate cyclases superfamily. Dehydroquinate synthase family. It depends on Co(2+) as a cofactor. Requires Zn(2+) as cofactor. NAD(+) serves as cofactor.

It localises to the cytoplasm. It catalyses the reaction 7-phospho-2-dehydro-3-deoxy-D-arabino-heptonate = 3-dehydroquinate + phosphate. It functions in the pathway metabolic intermediate biosynthesis; chorismate biosynthesis; chorismate from D-erythrose 4-phosphate and phosphoenolpyruvate: step 2/7. Catalyzes the conversion of 3-deoxy-D-arabino-heptulosonate 7-phosphate (DAHP) to dehydroquinate (DHQ). The sequence is that of 3-dehydroquinate synthase from Pelobacter propionicus (strain DSM 2379 / NBRC 103807 / OttBd1).